The sequence spans 479 residues: FAD-dependent monooxygenase atmM (479 aa).

The helical transmembrane segment at 10-30 threads the bilayer; it reads IIVGGSVAGLTLAHCLQRAGI. Residues Glu36, Gly50, Arg109, Asp309, and Ala322 each contribute to the FAD site. A helical transmembrane segment spans residues 445 to 465; that stretch reads WILVLLVIVVSFGLHSPELVI.

Belongs to the paxM FAD-dependent monooxygenase family. FAD is required as a cofactor.

It is found in the membrane. Its pathway is secondary metabolite biosynthesis. Its function is as follows. FAD-dependent monooxygenase; part of the ATM1 gene cluster that mediates the biosynthesis of aflatrem, a tremorgenic mycotoxin with acute neurotoxic effects. Synthesis of geranylgeranyl diphosphate (GGPP) by AtmG (a GGPP synthase) precedes condensation of GGPP with indole 3-glycerol phosphate, followed by epoxidation and cyclization by AtmM (a FAD-dependent monooxygenase) and AtmC (a prenyltransferase) to produce paspaline. AtmB is also essential for paspaline production, but its exact role has not been identified yet. AtmP, a cytochrome P450 monooxygenase, subsequently converts paspaline to 13-desoxypaxilline via PC-M6 by removal of the C-30 methyl group and oxidation at C-10. AtmQ, a cytochrome P450 monooxygenase, then catalyzes the oxidation of 13-desoxypaxilline, first at C-7 to produce paspalicine and then at C-13 to form paspalinine. Finally, AtmD prenylates paspalinine to form aflatrem. In Aspergillus flavus, this protein is FAD-dependent monooxygenase atmM.